The primary structure comprises 474 residues: Proline--tRNA ligase (474 aa).

This sequence belongs to the class-II aminoacyl-tRNA synthetase family. ProS type 3 subfamily. Homodimer.

It is found in the cytoplasm. The enzyme catalyses tRNA(Pro) + L-proline + ATP = L-prolyl-tRNA(Pro) + AMP + diphosphate. In terms of biological role, catalyzes the attachment of proline to tRNA(Pro) in a two-step reaction: proline is first activated by ATP to form Pro-AMP and then transferred to the acceptor end of tRNA(Pro). The chain is Proline--tRNA ligase from Mycoplasma mycoides subsp. mycoides SC (strain CCUG 32753 / NCTC 10114 / PG1).